We begin with the raw amino-acid sequence, 194 residues long: Putative lipoprotein LppK (194 aa).

The N-terminal stretch at 1-26 (MSRWTHRTFFIALSAIVTTAGFGSSG) is a signal peptide. Residue Cys-27 is the site of N-palmitoyl cysteine attachment. Cys-27 carries the S-diacylglycerol cysteine lipid modification. Residues 174 to 194 (GNSSGLTNPAPIKAPTPTPSH) form a disordered region. The segment covering 185–194 (IKAPTPTPSH) has biased composition (pro residues).

It belongs to the MTB12 family.

The protein localises to the cell membrane. This Mycobacterium leprae (strain TN) protein is Putative lipoprotein LppK (lppK).